Consider the following 337-residue polypeptide: Viral cathepsin (337 aa).

The N-terminal stretch at Met-1–Gly-19 is a signal peptide. The propeptide at His-20 to Leu-126 is activation peptide. Intrachain disulfides connect Cys-147/Cys-188, Cys-181/Cys-221, and Cys-276/Cys-324. Cys-150 is an active-site residue. A glycan (N-linked (GlcNAc...) asparagine; by host) is linked at Asn-172. Catalysis depends on residues His-283 and Asn-303.

Belongs to the peptidase C1 family. Synthesized as an inactive proenzyme and activated by proteolytic removal of the inhibitory propeptide.

It carries out the reaction Endopeptidase of broad specificity, hydrolyzing substrates of both cathepsin L and cathepsin B.. Cysteine protease that plays an essential role in host liquefaction to facilitate horizontal transmission of the virus. May participate in the degradation of foreign protein expressed by the baculovirus system. In Adoxophyes honmai (Smaller tea tortrix moth), this protein is Viral cathepsin (VCATH).